We begin with the raw amino-acid sequence, 251 residues long: MDFIVVKRSRKKKNGRGKFPKVSNTITQGDTDLWSQDTLQRKLDNSREKLEYSEFLKSVQSQLSEFKDPIHKCIILGLGRIHTLTASLQLSLFFEIMKIFNLQPRFCSFYDPAFLKDDVEFLENKGFCVLPDPPTPSCLKYTLLYMPHCPTSLYETWLAAYVNDDPRHFIMCGNNLQLYVDNKPSKEIVSTYPNVYKMCTKNYYTRLLFPEFPNVYAFNDLSFHFHDAQSFVEKKQPSKFVDASSVAEHPS.

The protein belongs to the SRR1 family.

The protein resides in the cytoplasm. Its subcellular location is the nucleus. The sequence is that of SRR1-like protein from Schizosaccharomyces pombe (strain 972 / ATCC 24843) (Fission yeast).